Here is a 252-residue protein sequence, read N- to C-terminus: MLAKRIIPCLDVKEGRVVKGVNFIGLQDVGDPVEIAALYNDAGADEIVFLDITATHEGRKTIIDVVEQTASKVFIPLTVGGGISSVKDMYNLLRAGADKVSINSAAVRNPKLIQEGAEHFGSQCIVVAIDARKVEEDKWNVYVNGGRVDTGMDAIEWAKRVVKLGAGEILLTSMDADGTKNGYDLRLTGAISNSVSVPVIASGGCGHVDHIIEVFQKTTVDAALAASIFHYGEATVQDVKRKLREANVEVRL.

Active-site residues include aspartate 11 and aspartate 130.

The protein belongs to the HisA/HisF family. As to quaternary structure, heterodimer of HisH and HisF.

The protein localises to the cytoplasm. The catalysed reaction is 5-[(5-phospho-1-deoxy-D-ribulos-1-ylimino)methylamino]-1-(5-phospho-beta-D-ribosyl)imidazole-4-carboxamide + L-glutamine = D-erythro-1-(imidazol-4-yl)glycerol 3-phosphate + 5-amino-1-(5-phospho-beta-D-ribosyl)imidazole-4-carboxamide + L-glutamate + H(+). The protein operates within amino-acid biosynthesis; L-histidine biosynthesis; L-histidine from 5-phospho-alpha-D-ribose 1-diphosphate: step 5/9. Its function is as follows. IGPS catalyzes the conversion of PRFAR and glutamine to IGP, AICAR and glutamate. The HisF subunit catalyzes the cyclization activity that produces IGP and AICAR from PRFAR using the ammonia provided by the HisH subunit. In Bacillus mycoides (strain KBAB4) (Bacillus weihenstephanensis), this protein is Imidazole glycerol phosphate synthase subunit HisF.